We begin with the raw amino-acid sequence, 255 residues long: Large ribosomal subunit protein uL4 (255 aa).

It belongs to the universal ribosomal protein uL4 family. In terms of assembly, part of the 50S ribosomal subunit.

One of the primary rRNA binding proteins, this protein initially binds near the 5'-end of the 23S rRNA. It is important during the early stages of 50S assembly. It makes multiple contacts with different domains of the 23S rRNA in the assembled 50S subunit and ribosome. Its function is as follows. Forms part of the polypeptide exit tunnel. This Thermococcus kodakarensis (strain ATCC BAA-918 / JCM 12380 / KOD1) (Pyrococcus kodakaraensis (strain KOD1)) protein is Large ribosomal subunit protein uL4.